A 517-amino-acid chain; its full sequence is Gallate 1-beta-glucosyltransferase 84A24 (517 aa).

H19 acts as the Proton acceptor in catalysis. H19 contributes to the an anthocyanidin binding site. Q344, H359, W362, N363, S364, and E367 together coordinate UDP-alpha-D-glucose. G382 serves as a coordination point for an anthocyanidin. 2 residues coordinate UDP-alpha-D-glucose: D383 and Q384.

This sequence belongs to the UDP-glycosyltransferase family. As to expression, highly expressed in leaf. Also expressed in peel, stem, root and aril.

Its subcellular location is the cytoplasm. It carries out the reaction 3,4,5-trihydroxybenzoate + UDP-alpha-D-glucose = 1-O-galloyl-beta-D-glucose + UDP. The catalysed reaction is 3,4-dihydroxybenzoate + UDP-alpha-D-glucose = 1-O-(3,4-dihydroxy-benzoyl)-beta-D-glucose + UDP. The enzyme catalyses 4-hydroxybenzoate + UDP-alpha-D-glucose = 4-(beta-D-glucosyloxy)benzoate + UDP + H(+). It catalyses the reaction (E)-cinnamate + UDP-alpha-D-glucose = 1-O-(trans-cinnamoyl)-beta-D-glucose + UDP. It carries out the reaction (E)-sinapate + UDP-alpha-D-glucose = 1-O-(trans-sinapoyl)-beta-D-glucose + UDP. The catalysed reaction is (E)-4-coumarate + UDP-alpha-D-glucose = 1-O-(trans-4-coumaroyl)-beta-D-glucose + UDP. The enzyme catalyses (E)-caffeate + UDP-alpha-D-glucose = 1-O-[(E)-caffeoyl]-beta-D-glucose + UDP. It catalyses the reaction (E)-ferulate + UDP-alpha-D-glucose = 1-O-[(E)-feruloyl]-beta-D-glucose + UDP. It carries out the reaction genistein + UDP-alpha-D-glucose = genistein 7-O-beta-D-glucoside + UDP + H(+). The catalysed reaction is apigenin + UDP-alpha-D-glucose = apigenin 7-O-beta-D-glucoside + UDP + H(+). The enzyme catalyses luteolin + UDP-alpha-D-glucose = luteolin 7-O-beta-D-glucoside + UDP + H(+). Glucosyltransferase that catalyzes the formation of 1-O-beta-D-glucose esters with hydroxybenzoic acids and cinnamic acid including its derivatives as preferred glucosyl acceptors. Has significant activity with gallic acid (3,4,5-trihydroxybenzoic acid), 3,4-dihydroxybenzoic acid, 4-hydroxybenzoic acid, cinnamic acid, sinapic acid, coumaric acid, caffeic acid and ferulic acid in vitro. Gallic acid is the predicted native substrate of the enzyme, which thus catalyzes the formation of 1-O-galloyl-beta-D-glucose, the first committed step of hydrolyzable tannins (HTs) biosynthesis, with punicalagin isomers being the major HTs of pomegranate. Catalyzes the formation of flavonoid glucosides with genistein, apigenin and luteolin in vitro. Has low activity with benzoic acid, 2-hydroxybenzoic acid, 3-hydroxybenzoic acid, 2,4-dihydroxybenzoic acid, naringenin and quercetin. No activity with catechol, resveratrol, chlorogenic acid, catechin and epicatechin (building blocks of proanthocyanidins) or cyanidin, delphinidin and pelargonidin (the three anthocyanidins). The chain is Gallate 1-beta-glucosyltransferase 84A24 from Punica granatum (Pomegranate).